The following is a 458-amino-acid chain: MSITKEFDTIAAISTPLGEGAIGIVRISGTDALKIASKIYRGKDLSAIQSHTLNYGHIVDPDKNEILDEVMLGVMLAPKTFTREDVIEINTHGGIAVTNEILQLILRHGARMAEPGEFTKRAFLNGRVDLTQAEAVMDLIRAKTDKAMDIAVKQLDGSLKTLINNTRQEILNTLAQVEVNIDYPEYDDVEEMTTTLMREKTQEFQALMENLLRTARRGKILREGLSTAIIGRPNVGKSSLLNNLLREEKAIVTDIEGTTRDVIEEYVNIKGVPLKLVDTAGIRDTDDIVEKIGVERSKKALEEADLVLLVLNSSEPLTLQDRSLLELSKESNRIVLLNKTDLPQKIEVNELPKNVIPISVLENENIDKIEERINDIFFDNAGMVEHDATYLSNARHISLIEKAVDSLKAVNEGLELGMPVDLLQVDMTRTWEILGEITGDAAPDELITQLFSQFCLGK.

Residues R26, E88, and R127 each contribute to the (6S)-5-formyl-5,6,7,8-tetrahydrofolate site. Residues 224–378 form the TrmE-type G domain; the sequence is GLSTAIIGRP…IEERINDIFF (155 aa). N234 contributes to the K(+) binding site. Residues 234 to 239, 253 to 259, and 278 to 281 each bind GTP; these read NVGKSS, TDIEGTT, and DTAG. A Mg(2+)-binding site is contributed by S238. Residues T253, I255, and T258 each contribute to the K(+) site. Residue T259 coordinates Mg(2+). Position 458 (K458) interacts with (6S)-5-formyl-5,6,7,8-tetrahydrofolate.

The protein belongs to the TRAFAC class TrmE-Era-EngA-EngB-Septin-like GTPase superfamily. TrmE GTPase family. Homodimer. Heterotetramer of two MnmE and two MnmG subunits. Requires K(+) as cofactor.

The protein localises to the cytoplasm. Exhibits a very high intrinsic GTPase hydrolysis rate. Involved in the addition of a carboxymethylaminomethyl (cmnm) group at the wobble position (U34) of certain tRNAs, forming tRNA-cmnm(5)s(2)U34. The protein is tRNA modification GTPase MnmE of Streptococcus agalactiae serotype Ia (strain ATCC 27591 / A909 / CDC SS700).